We begin with the raw amino-acid sequence, 215 residues long: Ion-translocating oxidoreductase complex subunit G (215 aa).

The chain crosses the membrane as a helical span at residues 9 to 29 (GLLLSGFALICTAAVALVNEA). An FMN phosphoryl threonine modification is found at Thr176.

Belongs to the RnfG family. In terms of assembly, the complex is composed of six subunits: RnfA, RnfB, RnfC, RnfD, RnfE and RnfG. The cofactor is FMN.

Its subcellular location is the cell inner membrane. In terms of biological role, part of a membrane-bound complex that couples electron transfer with translocation of ions across the membrane. This is Ion-translocating oxidoreductase complex subunit G from Shewanella amazonensis (strain ATCC BAA-1098 / SB2B).